Consider the following 232-residue polypeptide: GFP-like fluorescent chromoprotein dsFP483 (232 aa).

The segment at residues 66 to 68 is a cross-link (2-iminomethyl-5-imidazolinone (Gln-Gly)); that stretch reads QYG. At Tyr67 the chain carries 2,3-didehydrotyrosine.

This sequence belongs to the GFP family. In terms of processing, contains a chromophore consisting of modified amino acid residues. The chromophore is formed by autocatalytic backbone condensation between Xaa-N and Gly-(N+2), oxidation of Tyr-(N+1) to didehydrotyrosine, and formation of a double bond to the alpha-amino nitrogen of residue Xaa-N. Maturation of the chromophore requires nothing other than molecular oxygen. The precise stereochemistry of the tyrosine has not been determined. In terms of tissue distribution, oral disk.

Pigment protein that is green in color. The chain is GFP-like fluorescent chromoprotein dsFP483 from Discosoma striata (Striped mushroom).